The following is a 205-amino-acid chain: Recombination protein RecR (205 aa).

The segment at 58-75 (CSVCQNVTDRDADPCYIC) adopts a C4-type zinc-finger fold. The 100-residue stretch at 83–182 (SVICVVESPA…SVTKIARGIP (100 aa)) folds into the Toprim domain.

This sequence belongs to the RecR family.

Its function is as follows. May play a role in DNA repair. It seems to be involved in an RecBC-independent recombinational process of DNA repair. It may act with RecF and RecO. The sequence is that of Recombination protein RecR from Chlorobium limicola (strain DSM 245 / NBRC 103803 / 6330).